The following is a 20-amino-acid chain: Protease inhibitor (20 aa).

In terms of assembly, monomer. Post-translationally, glycosylated. As to expression, stored in epidermis and secreted into the hemolymph and cuticle. Not detected in the interior of the epidermis, fat body cells or columnar or goblet cells of the midgut epithelium (at protein level).

Inhibits trypsin and chymotrypsin. This chain is Protease inhibitor, found in Antheraea mylitta (Tasar silkworm).